Here is a 124-residue protein sequence, read N- to C-terminus: Small ribosomal subunit protein uS12 (124 aa).

The span at 11 to 20 (GRKRLKKKSK) shows a compositional bias: basic residues. The segment at 11–30 (GRKRLKKKSKSPALENNPQK) is disordered. Residue aspartate 89 is modified to 3-methylthioaspartic acid. The segment at 105 to 124 (EGVANRRQSRSRYGAKKPKK) is disordered. Positions 111 to 124 (RQSRSRYGAKKPKK) are enriched in basic residues.

Belongs to the universal ribosomal protein uS12 family. In terms of assembly, part of the 30S ribosomal subunit. Contacts proteins S8 and S17. May interact with IF1 in the 30S initiation complex.

Its function is as follows. With S4 and S5 plays an important role in translational accuracy. Interacts with and stabilizes bases of the 16S rRNA that are involved in tRNA selection in the A site and with the mRNA backbone. Located at the interface of the 30S and 50S subunits, it traverses the body of the 30S subunit contacting proteins on the other side and probably holding the rRNA structure together. The combined cluster of proteins S8, S12 and S17 appears to hold together the shoulder and platform of the 30S subunit. In Kosmotoga olearia (strain ATCC BAA-1733 / DSM 21960 / TBF 19.5.1), this protein is Small ribosomal subunit protein uS12.